The primary structure comprises 112 residues: ATP synthase epsilon chain (112 aa).

The protein belongs to the ATPase epsilon chain family. F-type ATPases have 2 components, CF(1) - the catalytic core - and CF(0) - the membrane proton channel. CF(1) has five subunits: alpha(3), beta(3), gamma(1), delta(1), epsilon(1). CF(0) has three main subunits: a, b and c.

It localises to the cell inner membrane. In terms of biological role, produces ATP from ADP in the presence of a proton gradient across the membrane. In Rickettsia rickettsii (strain Sheila Smith), this protein is ATP synthase epsilon chain.